The following is a 176-amino-acid chain: Large ribosomal subunit protein uL6 (176 aa).

Belongs to the universal ribosomal protein uL6 family. In terms of assembly, part of the 50S ribosomal subunit.

Functionally, this protein binds to the 23S rRNA, and is important in its secondary structure. It is located near the subunit interface in the base of the L7/L12 stalk, and near the tRNA binding site of the peptidyltransferase center. The polypeptide is Large ribosomal subunit protein uL6 (Lactobacillus helveticus (strain DPC 4571)).